A 329-amino-acid chain; its full sequence is Biotin synthase (329 aa).

The Radical SAM core domain occupies 46 to 275 (FFGRRLKLVR…LNPKAELRAS (230 aa)). [4Fe-4S] cluster is bound by residues cysteine 64, cysteine 68, and cysteine 71. Cysteine 108, cysteine 140, cysteine 200, and arginine 273 together coordinate [2Fe-2S] cluster.

Belongs to the radical SAM superfamily. Biotin synthase family. Homodimer. [4Fe-4S] cluster serves as cofactor. [2Fe-2S] cluster is required as a cofactor.

The catalysed reaction is (4R,5S)-dethiobiotin + (sulfur carrier)-SH + 2 reduced [2Fe-2S]-[ferredoxin] + 2 S-adenosyl-L-methionine = (sulfur carrier)-H + biotin + 2 5'-deoxyadenosine + 2 L-methionine + 2 oxidized [2Fe-2S]-[ferredoxin]. It functions in the pathway cofactor biosynthesis; biotin biosynthesis; biotin from 7,8-diaminononanoate: step 2/2. Catalyzes the conversion of dethiobiotin (DTB) to biotin by the insertion of a sulfur atom into dethiobiotin via a radical-based mechanism. The chain is Biotin synthase from Thermus thermophilus (strain ATCC BAA-163 / DSM 7039 / HB27).